Here is a 266-residue protein sequence, read N- to C-terminus: MDISASTDRLLLVVEIGNSSTSFVVFQGDQSLALQKVATNLLTTVDGVAASVEPIFAAHPMLVDAVVCSVVPQAEEAVVTYLHGSITGKVMQVNSALKLPFTLAYEDVTTFGADRLALCAWCCLSHTAYAFIALDIGTACTIDVLNSKLHYLGGMIMPGLELMARSLHEHTARLPLVDVSTVSLSLLGNSTTECMQLGIVWNFTLGLEKMIESIKMYLEYEEHDREILLVATGGAAPFVTSLFTMQCQVEELAVAHGARLLFSYNQ.

ATP is bound at residue 15–22; it reads EIGNSSTS. Substrate contacts are provided by residues Y105 and 112–115; that span reads GADR. Catalysis depends on D114, which acts as the Proton acceptor. A K(+)-binding site is contributed by D135. An ATP-binding site is contributed by T138. Residue T191 coordinates substrate.

Belongs to the type III pantothenate kinase family. Homodimer. It depends on NH4(+) as a cofactor. Requires K(+) as cofactor.

The protein resides in the cytoplasm. It catalyses the reaction (R)-pantothenate + ATP = (R)-4'-phosphopantothenate + ADP + H(+). Its pathway is cofactor biosynthesis; coenzyme A biosynthesis; CoA from (R)-pantothenate: step 1/5. Catalyzes the phosphorylation of pantothenate (Pan), the first step in CoA biosynthesis. This chain is Type III pantothenate kinase, found in Chlorobium chlorochromatii (strain CaD3).